A 543-amino-acid chain; its full sequence is NXPE family member 4 (543 aa).

Positions 1–26 are cleaved as a signal peptide; it reads MKTLASRKSLWMLLFIVIFWVSFTVF. N-linked (GlcNAc...) asparagine glycosylation is found at Asn-91, Asn-159, and Asn-223.

The protein belongs to the NXPE family.

The protein localises to the secreted. This chain is NXPE family member 4 (Nxpe4), found in Mus musculus (Mouse).